The primary structure comprises 292 residues: Elongation factor Ts (292 aa).

The tract at residues 80–83 (TDSV) is involved in Mg(2+) ion dislocation from EF-Tu.

The protein belongs to the EF-Ts family.

It is found in the cytoplasm. In terms of biological role, associates with the EF-Tu.GDP complex and induces the exchange of GDP to GTP. It remains bound to the aminoacyl-tRNA.EF-Tu.GTP complex up to the GTP hydrolysis stage on the ribosome. The chain is Elongation factor Ts from Lactiplantibacillus plantarum (strain ATCC BAA-793 / NCIMB 8826 / WCFS1) (Lactobacillus plantarum).